Consider the following 859-residue polypeptide: Leucine--tRNA ligase (859 aa).

Residues 42-52 (PYPSGRLHMGH) carry the 'HIGH' region motif. The 'KMSKS' region signature appears at 618–622 (KMSKS). Residue lysine 621 participates in ATP binding.

It belongs to the class-I aminoacyl-tRNA synthetase family.

The protein localises to the cytoplasm. The catalysed reaction is tRNA(Leu) + L-leucine + ATP = L-leucyl-tRNA(Leu) + AMP + diphosphate. The protein is Leucine--tRNA ligase of Shewanella pealeana (strain ATCC 700345 / ANG-SQ1).